The chain runs to 511 residues: Lysine--tRNA ligase (511 aa).

2 residues coordinate Mg(2+): E422 and E429.

Belongs to the class-II aminoacyl-tRNA synthetase family. Homodimer. The cofactor is Mg(2+).

The protein resides in the cytoplasm. It carries out the reaction tRNA(Lys) + L-lysine + ATP = L-lysyl-tRNA(Lys) + AMP + diphosphate. The protein is Lysine--tRNA ligase of Chlorobaculum tepidum (strain ATCC 49652 / DSM 12025 / NBRC 103806 / TLS) (Chlorobium tepidum).